The primary structure comprises 141 residues: Large ribosomal subunit protein uL11 (141 aa).

Belongs to the universal ribosomal protein uL11 family. As to quaternary structure, part of the ribosomal stalk of the 50S ribosomal subunit. Interacts with L10 and the large rRNA to form the base of the stalk. L10 forms an elongated spine to which L12 dimers bind in a sequential fashion forming a multimeric L10(L12)X complex. In terms of processing, one or more lysine residues are methylated.

Functionally, forms part of the ribosomal stalk which helps the ribosome interact with GTP-bound translation factors. The sequence is that of Large ribosomal subunit protein uL11 from Syntrophomonas wolfei subsp. wolfei (strain DSM 2245B / Goettingen).